Reading from the N-terminus, the 878-residue chain is Alanine--tRNA ligase (878 aa).

Residues histidine 571, histidine 575, cysteine 673, and histidine 677 each contribute to the Zn(2+) site.

Belongs to the class-II aminoacyl-tRNA synthetase family. Requires Zn(2+) as cofactor.

It is found in the cytoplasm. It carries out the reaction tRNA(Ala) + L-alanine + ATP = L-alanyl-tRNA(Ala) + AMP + diphosphate. Functionally, catalyzes the attachment of alanine to tRNA(Ala) in a two-step reaction: alanine is first activated by ATP to form Ala-AMP and then transferred to the acceptor end of tRNA(Ala). Also edits incorrectly charged Ser-tRNA(Ala) and Gly-tRNA(Ala) via its editing domain. The chain is Alanine--tRNA ligase from Syntrophus aciditrophicus (strain SB).